The chain runs to 1877 residues: Protein TIC 214 (1877 aa).

6 consecutive transmembrane segments (helical) span residues Ile-18 to Gly-38, Phe-67 to Leu-87, Pro-90 to His-110, Leu-127 to Leu-147, Val-175 to Ile-195, and Ile-224 to Ile-244. A compositionally biased stretch (basic and acidic residues) spans Phe-249–Arg-258. Positions Phe-249–Glu-308 are disordered. 2 stretches are compositionally biased toward acidic residues: residues Gly-259–Thr-271 and Gly-284–Glu-298. Basic and acidic residues predominate over residues Asp-299–Glu-308.

The protein belongs to the TIC214 family. In terms of assembly, part of the Tic complex.

The protein resides in the plastid. Its subcellular location is the chloroplast inner membrane. Involved in protein precursor import into chloroplasts. May be part of an intermediate translocation complex acting as a protein-conducting channel at the inner envelope. The sequence is that of Protein TIC 214 from Eucalyptus globulus subsp. globulus (Tasmanian blue gum).